The following is a 197-amino-acid chain: MSSVSLVASAELPTPWGVFTMTGFKEEATGKDHVALSMGDITTDAPVLARIHSECLTGDALFSLRCDCGFQLQAALQRIAKEERGVLLYVRQEGRGIGLLNKIHAYHLQDQGADTVEANEALGFAPDLRDYTICADMLKLLDVKSLRLMTNNPRKIKAMEKYGIPVAERVPLEEGKNAYNEFYLATKAGKLGHMLHD.

50 to 54 serves as a coordination point for GTP; the sequence is RIHSE. Cys-55, Cys-66, and Cys-68 together coordinate Zn(2+). Residues Gln-71, 93-95, and Thr-115 each bind GTP; that span reads EGR. The Proton acceptor role is filled by Asp-127. Residue Arg-129 is the Nucleophile of the active site. GTP is bound by residues Thr-150 and Lys-155.

Belongs to the GTP cyclohydrolase II family. The cofactor is Zn(2+).

The catalysed reaction is GTP + 4 H2O = 2,5-diamino-6-hydroxy-4-(5-phosphoribosylamino)-pyrimidine + formate + 2 phosphate + 3 H(+). It participates in cofactor biosynthesis; riboflavin biosynthesis; 5-amino-6-(D-ribitylamino)uracil from GTP: step 1/4. In terms of biological role, catalyzes the conversion of GTP to 2,5-diamino-6-ribosylamino-4(3H)-pyrimidinone 5'-phosphate (DARP), formate and pyrophosphate. The chain is GTP cyclohydrolase-2 from Tolumonas auensis (strain DSM 9187 / NBRC 110442 / TA 4).